The sequence spans 1247 residues: E3 ubiquitin-protein ligase hecw-1 (1247 aa).

Residues 602–635 enclose the WW 1 domain; it reads TPPESHWKTYLDAKKRKFYVNHVTKETRWTKPDT. Residues 633 to 659 form a disordered region; sequence PDTLNNNHIEPETPVHKRLSDRSASPR. Over residues 641–653 the composition is skewed to basic and acidic residues; the sequence is IEPETPVHKRLSD. The 33-residue stretch at 745-777 folds into the WW 2 domain; it reads QPLPSGWECITMNNRTVFLNHANKETSFYDPRI. An HECT domain is found at 914–1247; it reads DPFVLKKSRL…IVNGMSYSIE (334 aa). Residue Cys1215 is the Glycyl thioester intermediate of the active site.

In terms of tissue distribution, expressed in the nervous system throughout the body. In the anterior ganglion, expression is limited to the two lateral outer labial neurons OLLL and OLLR.

Its subcellular location is the cytoplasm. The catalysed reaction is S-ubiquitinyl-[E2 ubiquitin-conjugating enzyme]-L-cysteine + [acceptor protein]-L-lysine = [E2 ubiquitin-conjugating enzyme]-L-cysteine + N(6)-ubiquitinyl-[acceptor protein]-L-lysine.. The protein operates within protein modification; protein ubiquitination. Its function is as follows. E3 ubiquitin-protein ligase. Functions in the OLL neurons in the anterior ganglion to inhibit avoidance to microbial pathogens such as P.aeruginosa although worms do display avoidance behavior, vacating a P.aeruginosa lawn within 24 hours. Likely to act by inhibiting the neuropeptide receptor npr-1. In Caenorhabditis elegans, this protein is E3 ubiquitin-protein ligase hecw-1.